Reading from the N-terminus, the 285-residue chain is Sulfotransferase 2A1 (285 aa).

3'-phosphoadenylyl sulfate is bound by residues K44, S45, G46, T47, N48, and W49. H99 serves as the catalytic Proton acceptor. Positions 121, 129, 184, 218, 223, 247, 248, and 249 each coordinate 3'-phosphoadenylyl sulfate. The residue at position 251 (S251) is a Phosphoserine.

It belongs to the sulfotransferase 1 family. As to quaternary structure, homodimer. Predominanly expressed in liver. Detected also in adrenal gland and in jejunum.

It localises to the cytoplasm. It is found in the cytosol. The catalysed reaction is an alcohol + 3'-phosphoadenylyl sulfate = an alkyl sulfate + adenosine 3',5'-bisphosphate + H(+). It carries out the reaction 3beta-hydroxyandrost-5-en-17-one + 3'-phosphoadenylyl sulfate = dehydroepiandrosterone 3-sulfate + adenosine 3',5'-bisphosphate + H(+). It catalyses the reaction taurolithocholate + 3'-phosphoadenylyl sulfate = taurolithocholate 3-sulfate + adenosine 3',5'-bisphosphate + H(+). The enzyme catalyses lithocholate + 3'-phosphoadenylyl sulfate = lithocholate sulfate + adenosine 3',5'-bisphosphate + H(+). The catalysed reaction is (24S)-hydroxycholesterol + 3'-phosphoadenylyl sulfate = (24S)-hydroxycholesterol 24-sulfate + adenosine 3',5'-bisphosphate + H(+). It carries out the reaction (24S)-hydroxycholesterol + 3'-phosphoadenylyl sulfate = (24S)-hydroxycholesterol 3-sulfate + adenosine 3',5'-bisphosphate + H(+). It catalyses the reaction (24S)-hydroxycholesterol 24-sulfate + 3'-phosphoadenylyl sulfate = (24S)-hydroxycholesterol 3,24-disulfate + adenosine 3',5'-bisphosphate + H(+). The enzyme catalyses pregnenolone + 3'-phosphoadenylyl sulfate = pregnenolone sulfate + adenosine 3',5'-bisphosphate + H(+). The catalysed reaction is androsterone + 3'-phosphoadenylyl sulfate = androsterone 3alpha-sulfate + adenosine 3',5'-bisphosphate + H(+). In terms of biological role, sulfotransferase that utilizes 3'-phospho-5'-adenylyl sulfate (PAPS) as sulfonate donor to catalyze the sulfonation of steroids and bile acids in the liver and adrenal glands. Mediates the sulfation of a wide range of steroids and sterols, including pregnenolone, androsterone, DHEA, bile acids, cholesterol and as well many xenobiotics that contain alcohol and phenol functional groups. Sulfonation increases the water solubility of most compounds, and therefore their renal excretion, but it can also result in bioactivation to form active metabolites. Plays an important role in maintening steroid and lipid homeostasis. Plays a key role in bile acid metabolism. In addition, catalyzes the metabolic activation of potent carcinogenic polycyclic arylmethanols. The sequence is that of Sulfotransferase 2A1 (SULT2A1) from Macaca fascicularis (Crab-eating macaque).